The primary structure comprises 435 residues: tRNA modification GTPase MnmE (435 aa).

Residues arginine 20, glutamate 77, and lysine 117 each coordinate (6S)-5-formyl-5,6,7,8-tetrahydrofolate. A TrmE-type G domain is found at 214–359; sequence GIKVVIVGVP…FLKEIESFCL (146 aa). Residues 224 to 229, 243 to 249, and 268 to 271 each bind GTP; these read NSGKSS, TEEEGTT, and DTAG. 2 residues coordinate Mg(2+): serine 228 and threonine 249. Lysine 435 is a binding site for (6S)-5-formyl-5,6,7,8-tetrahydrofolate.

The protein belongs to the TRAFAC class TrmE-Era-EngA-EngB-Septin-like GTPase superfamily. TrmE GTPase family. Homodimer. Heterotetramer of two MnmE and two MnmG subunits. Requires K(+) as cofactor.

It is found in the cytoplasm. Exhibits a very high intrinsic GTPase hydrolysis rate. Involved in the addition of a carboxymethylaminomethyl (cmnm) group at the wobble position (U34) of certain tRNAs, forming tRNA-cmnm(5)s(2)U34. In Bartonella bacilliformis (strain ATCC 35685 / KC583 / Herrer 020/F12,63), this protein is tRNA modification GTPase MnmE.